The chain runs to 194 residues: UPF0301 protein FTA_1286 (194 aa).

It belongs to the UPF0301 (AlgH) family.

This Francisella tularensis subsp. holarctica (strain FTNF002-00 / FTA) protein is UPF0301 protein FTA_1286.